The following is a 314-amino-acid chain: MEFDLGEYFRAAFEDKLLVKMPDREDDFMTPATRLLEKRREMVEVEQALSTQKEEFQMKSESLQQRRSELELKEEKLKDSLFKFDKFLKENDSKRKRALHKAAEERQMAAQKERDALRLQAENTQLMQRKHILLQRQEKNSIYQRYLQRVLERTDEFQEVQEMIDRFNTLMATQNKLLKRELKNQEHAEMEKARLLHYQEETRSQILELNNQIAQLQGELERARAVAFQWESRWAQIQNTAAENTLRLGRVRMATLNLFQTISKQMRLKTDISVEDTEAQLEKIQICFEDLAAIHKDLKKAEMVPQTPAVPTTN.

Coiled-coil stretches lie at residues 34 to 139 (RLLE…RQEK) and 175 to 233 (NKLL…WESR).

It belongs to the CFAP73 family.

The polypeptide is Coiled-coil domain-containing protein 42 like-2 (Xenopus laevis (African clawed frog)).